Consider the following 197-residue polypeptide: Xanthine phosphoribosyltransferase (197 aa).

Xanthine contacts are provided by L20 and T27. A128–A132 is a binding site for 5-phospho-alpha-D-ribose 1-diphosphate. K156 is a binding site for xanthine.

It belongs to the purine/pyrimidine phosphoribosyltransferase family. Xpt subfamily. As to quaternary structure, homodimer.

It is found in the cytoplasm. It catalyses the reaction XMP + diphosphate = xanthine + 5-phospho-alpha-D-ribose 1-diphosphate. The protein operates within purine metabolism; XMP biosynthesis via salvage pathway; XMP from xanthine: step 1/1. Functionally, converts the preformed base xanthine, a product of nucleic acid breakdown, to xanthosine 5'-monophosphate (XMP), so it can be reused for RNA or DNA synthesis. The chain is Xanthine phosphoribosyltransferase from Lactococcus lactis subsp. lactis (strain IL1403) (Streptococcus lactis).